The following is a 345-amino-acid chain: tRNA N6-adenosine threonylcarbamoyltransferase (345 aa).

2 residues coordinate Fe cation: histidine 117 and histidine 121. Residues 140–144, aspartate 173, glycine 186, and asparagine 279 each bind substrate; that span reads LVSGG. Residue aspartate 307 participates in Fe cation binding.

This sequence belongs to the KAE1 / TsaD family. Fe(2+) is required as a cofactor.

The protein localises to the cytoplasm. It carries out the reaction L-threonylcarbamoyladenylate + adenosine(37) in tRNA = N(6)-L-threonylcarbamoyladenosine(37) in tRNA + AMP + H(+). Functionally, required for the formation of a threonylcarbamoyl group on adenosine at position 37 (t(6)A37) in tRNAs that read codons beginning with adenine. Is involved in the transfer of the threonylcarbamoyl moiety of threonylcarbamoyl-AMP (TC-AMP) to the N6 group of A37, together with TsaE and TsaB. TsaD likely plays a direct catalytic role in this reaction. The polypeptide is tRNA N6-adenosine threonylcarbamoyltransferase (Verminephrobacter eiseniae (strain EF01-2)).